A 948-amino-acid polypeptide reads, in one-letter code: Protocadherin alpha-2 (948 aa).

Residues 1–22 form the signal peptide; sequence MASSIRRGLGAWTRLLSLLLLA. At 23-697 the chain is on the extracellular side; sequence AWEVGSGQLR…GSEATLVDVN (675 aa). 6 Cadherin domains span residues 30 to 133, 157 to 242, 243 to 350, 351 to 455, 456 to 565, and 588 to 678; these read QLRY…PPVF, ASDA…EPTF, AQSV…TPEV, SITS…APAF, AQPE…APAL, and GHVV…APKA. Residues N257, N265, N362, and N548 are each glycosylated (N-linked (GlcNAc...) asparagine). Residues 698–718 form a helical membrane-spanning segment; that stretch reads VYLIIAICAVSSLLVLTVLLY. The Cytoplasmic portion of the chain corresponds to 719 to 948; the sequence is TALRCSVPAT…GNSTTDNSDQ (230 aa). One copy of the PXXP 1 repeat lies at 734–737; sequence PGKP. A 5 X 4 AA repeats of P-X-X-P region spans residues 734–892; the sequence is PGKPTLVCSS…PDKFIIPGSP (159 aa). Disordered regions lie at residues 755-801, 829-854, and 868-948; these read RQRV…RQPN, GPGG…EVSP, and KYGP…NSDQ. Basic and acidic residues predominate over residues 783 to 795; it reads AEEKQLSESEYVG. PXXP repeat units lie at residues 797-800, 830-833, 871-874, and 889-892; these read PRQP, PGGP, PGNP, and PGSP. Positions 907–921 are enriched in basic and acidic residues; sequence DKSDFITFGKKEETK.

The protein resides in the cell membrane. Functionally, potential calcium-dependent cell-adhesion protein. May be involved in the establishment and maintenance of specific neuronal connections in the brain. The chain is Protocadherin alpha-2 (PCDHA2) from Pan troglodytes (Chimpanzee).